A 515-amino-acid chain; its full sequence is Maturase K (515 aa).

It belongs to the intron maturase 2 family. MatK subfamily.

It localises to the plastid. Its subcellular location is the chloroplast. Usually encoded in the trnK tRNA gene intron. Probably assists in splicing its own and other chloroplast group II introns. This Picea pungens (Colorado spruce) protein is Maturase K.